The following is a 424-amino-acid chain: Tubulin-specific chaperone cofactor E-like protein (424 aa).

Phosphoserine is present on residues Ser18 and Ser41. LRR repeat units lie at residues 73 to 98, 99 to 123, 124 to 147, 150 to 172, 173 to 197, 199 to 224, and 226 to 250; these read CAHV…IVSN, VPQL…TCAG, SFSG…HMIL, LPDL…PSIC, CHSL…KLGV, FPSL…SLAR, and FPNL…KLNS. The region spanning 262–303 is the LRRCT domain; that stretch reads IPLLQPYTTEERRKLVIARLPSVSKLNGSVVTDGEREDSERF. The region spanning 334 to 424 is the Ubiquitin-like domain; that stretch reads AEVDLRPQSS…DKIYVESKTK (91 aa). A coiled-coil region spans residues 349–375; sequence HFNDQVEEMSIRLDQTVAELKKQLKTL.

As to expression, abundantly expressed in testis, but is also present in several tissues at a much lower level.

It localises to the cytoplasm. The protein localises to the cytoskeleton. In terms of biological role, acts as a regulator of tubulin stability. The polypeptide is Tubulin-specific chaperone cofactor E-like protein (TBCEL) (Homo sapiens (Human)).